Reading from the N-terminus, the 1237-residue chain is Clustered mitochondria protein homolog (1237 aa).

Residues 291–535 form the Clu domain; that stretch reads DITRSQENCL…RITPLDVAWS (245 aa). Basic and acidic residues-rich tracts occupy residues 575–597 and 845–854; these read RKTA…DKAE and SQIKSQEHSP. Disordered regions lie at residues 575 to 614 and 845 to 886; these read RKTA…AVAS and SQIK…VAAS. TPR repeat units lie at residues 957 to 990, 999 to 1032, and 1041 to 1074; these read AKLY…TERT, ILSY…WKII, and ITTM…CEGL. Disordered stretches follow at residues 1152 to 1189 and 1201 to 1237; these read RLRR…KSIG and FIEG…VQTA. Residues 1156-1187 show a composition bias toward polar residues; the sequence is TNLSPRMTIGTKPQPQVGQNAPATTNGATSKS.

This sequence belongs to the CLU family. May associate with the eukaryotic translation initiation factor 3 (eIF-3) complex.

The protein resides in the cytoplasm. In terms of biological role, mRNA-binding protein involved in proper cytoplasmic distribution of mitochondria. This Ajellomyces capsulatus (strain NAm1 / WU24) (Darling's disease fungus) protein is Clustered mitochondria protein homolog.